The chain runs to 467 residues: MDANGIKLTPKDIVSKLDEYIVGQDDAKRKVAIALRNRYRRSLLDEETKQEIAPKNILMIGPTGVGKTEIARRMAKVVGAPFIKVEATKFTEVGYVGRDVESMVRDLVDVAVRLVKDQKKGLVKDEAVNKANEKLVKLLVPSMKKKASNNSNPLESLLGGAIPNFGNNDDEEEETPTEEIKTKRSEIKKQLLDGKLEEEKVRIKVEQDPGALGMLGTNQNQQMQDMMNQLMPKRKVEREVPVKTARKILADDFADELIDQETANQEALELAEQMGIIFIDEIDKVATNNANSGQDVSRQGVQRDILPILEGSMIQTKYGTVNTEHMLFIGAGAFHVSKPSDLIPELQGRFPIRVELESLTVDDFYRILTEPKLSLIKQYEALLQTEEVTVNFTKEAITRLAEMAYQVNQDTDNIGARRLHTILEKMLEDLSFEAPSMPNAVVDITPQYVDDKLKSISTNKDLSAFIL.

ATP contacts are provided by residues Val-22 and 64-69 (GVGKTE). The tract at residues 146 to 185 (KASNNSNPLESLLGGAIPNFGNNDDEEEETPTEEIKTKRS) is disordered. Residues 168–177 (NDDEEEETPT) show a composition bias toward acidic residues. ATP contacts are provided by Asp-280, Glu-345, and Arg-417.

This sequence belongs to the ClpX chaperone family. HslU subfamily. In terms of assembly, a double ring-shaped homohexamer of HslV is capped on each side by a ring-shaped HslU homohexamer. The assembly of the HslU/HslV complex is dependent on binding of ATP.

Its subcellular location is the cytoplasm. ATPase subunit of a proteasome-like degradation complex; this subunit has chaperone activity. The binding of ATP and its subsequent hydrolysis by HslU are essential for unfolding of protein substrates subsequently hydrolyzed by HslV. HslU recognizes the N-terminal part of its protein substrates and unfolds these before they are guided to HslV for hydrolysis. The polypeptide is ATP-dependent protease ATPase subunit HslU (Staphylococcus haemolyticus (strain JCSC1435)).